The sequence spans 569 residues: Acyl-CoA-binding domain-containing protein 5 (569 aa).

Positions 1–31 (MELFYELLLTAAASLLVAFLLARLLASAATA) are cleaved as a signal peptide. In terms of domain architecture, ACB spans 415-506 (IEKRFGVAAA…LSEAIPGWMG (92 aa)). An acyl-CoA is bound by residues lysine 474 and tyrosine 493. N-linked (GlcNAc...) asparagine glycosylation is present at asparagine 508. Composition is skewed to polar residues over residues 533–544 (INQHDSQGNEDN) and 552–569 (LTSS…IPAE). The tract at residues 533–569 (INQHDSQGNEDNTGMYEGHLTSSPNPEKGQSSDIPAE) is disordered.

The protein belongs to the ACBP family. Highly expressed in seeds and leaves. Expressed at low levels in roots.

It localises to the endoplasmic reticulum. In terms of biological role, binds medium- and long-chain acyl-CoA esters with high affinity. Can interact in vitro with palmitoyl-CoA and linolenoyl-CoA. Binds phosphatidic acid (PA) and phosphatidylcholine (PC) in vitro. May play a role in the biosynthesis of phospholipids. The polypeptide is Acyl-CoA-binding domain-containing protein 5 (Oryza sativa subsp. japonica (Rice)).